We begin with the raw amino-acid sequence, 356 residues long: Protein-arginine kinase (356 aa).

The region spanning 24–256 (IIISSRVRVA…RQILAQEQAA (233 aa)) is the Phosphagen kinase C-terminal domain. Residues 27–31 (SSRVR), H93, R127, 178–182 (RASVM), and 209–214 (RGLYGE) each bind ATP. The short motif at 339-344 (RDIFRA) is the RDXXRA motif of the pArg binding pocket involved in allosteric regulation element.

It belongs to the ATP:guanido phosphotransferase family.

It carries out the reaction L-arginyl-[protein] + ATP = N(omega)-phospho-L-arginyl-[protein] + ADP + H(+). With respect to regulation, appears to be allosterically activated by the binding of pArg-containing polypeptides to the pArg-binding pocket localized in the C-terminal domain of McsB. Catalyzes the specific phosphorylation of arginine residues in proteins. The protein is Protein-arginine kinase of Pelotomaculum thermopropionicum (strain DSM 13744 / JCM 10971 / SI).